The primary structure comprises 274 residues: 2,3,4,5-tetrahydropyridine-2,6-dicarboxylate N-succinyltransferase (274 aa).

Substrate-binding residues include arginine 103 and aspartate 140.

This sequence belongs to the transferase hexapeptide repeat family. As to quaternary structure, homotrimer.

Its subcellular location is the cytoplasm. The catalysed reaction is (S)-2,3,4,5-tetrahydrodipicolinate + succinyl-CoA + H2O = (S)-2-succinylamino-6-oxoheptanedioate + CoA. It functions in the pathway amino-acid biosynthesis; L-lysine biosynthesis via DAP pathway; LL-2,6-diaminopimelate from (S)-tetrahydrodipicolinate (succinylase route): step 1/3. The protein is 2,3,4,5-tetrahydropyridine-2,6-dicarboxylate N-succinyltransferase of Haemophilus ducreyi (strain 35000HP / ATCC 700724).